We begin with the raw amino-acid sequence, 289 residues long: 2-dehydro-3-deoxyphosphooctonate aldolase (289 aa).

It belongs to the KdsA family.

It localises to the cytoplasm. It catalyses the reaction D-arabinose 5-phosphate + phosphoenolpyruvate + H2O = 3-deoxy-alpha-D-manno-2-octulosonate-8-phosphate + phosphate. Its pathway is carbohydrate biosynthesis; 3-deoxy-D-manno-octulosonate biosynthesis; 3-deoxy-D-manno-octulosonate from D-ribulose 5-phosphate: step 2/3. It functions in the pathway bacterial outer membrane biogenesis; lipopolysaccharide biosynthesis. The polypeptide is 2-dehydro-3-deoxyphosphooctonate aldolase (Cupriavidus taiwanensis (strain DSM 17343 / BCRC 17206 / CCUG 44338 / CIP 107171 / LMG 19424 / R1) (Ralstonia taiwanensis (strain LMG 19424))).